The primary structure comprises 78 residues: Small ribosomal subunit protein bS20 (78 aa).

Belongs to the bacterial ribosomal protein bS20 family.

Binds directly to 16S ribosomal RNA. In Streptococcus pneumoniae serotype 4 (strain ATCC BAA-334 / TIGR4), this protein is Small ribosomal subunit protein bS20.